The sequence spans 181 residues: MKKRGKKPELDWTDDEQEEIIWVSKSEIKRDAEELKKLGARLVELSQANLDKITLAETLLDAVNLARRSVKEAKRRQLQFIGKLLRSATEDEINHIRESLDKIANKHNQQQAMLHKLEQLRDELVVGDDEVLTKFYDEYPQADRQHLRNLVRAAKKEKEQNKAPKAYREIYQYLKDLILSD.

It belongs to the DarP family.

It is found in the cytoplasm. Functionally, member of a network of 50S ribosomal subunit biogenesis factors which assembles along the 30S-50S interface, preventing incorrect 23S rRNA structures from forming. Promotes peptidyl transferase center (PTC) maturation. This is Dual-action ribosomal maturation protein DarP from Actinobacillus succinogenes (strain ATCC 55618 / DSM 22257 / CCUG 43843 / 130Z).